Here is a 134-residue protein sequence, read N- to C-terminus: DNA-binding protein inhibitor ID-2 (134 aa).

The disordered stretch occupies residues 1–24; the sequence is MKAFSPVRSVRKNSLSDHGLGISR. A phosphoserine mark is found at Ser-14 and Ser-25. Positions 23–75 constitute a bHLH domain; that stretch reads SRSKTPVDDPMSLLYNMNDCYSKLKELVPSIPQNKKVSKMEILQHVIDYILDL. Residues 106–115 carry the Nuclear export signal motif; sequence LNTDISILSL.

As to quaternary structure, interacts with GATA4 and NKX2-5. Interacts with NR0B2. Interacts with CLOCK and BMAL1. Interacts with IFI204. Interacts with NEDD9/HEF1. Interacts with ASB4; this interaction promotes ID2 proteasomal degradation. Post-translationally, ubiquitinated in a ASB4-depedent manner, leading to proteasomal degradation. Phosphorylated in vitro by CDK1, PKA and PKC.

Its subcellular location is the cytoplasm. The protein resides in the nucleus. Its function is as follows. Transcriptional regulator (lacking a basic DNA binding domain) which negatively regulates the basic helix-loop-helix (bHLH) transcription factors by forming heterodimers and inhibiting their DNA binding and transcriptional activity. Implicated in regulating a variety of cellular processes, including cellular growth, senescence, differentiation, apoptosis, angiogenesis, and neoplastic transformation. Inhibits skeletal muscle and cardiac myocyte differentiation. Regulates the circadian clock by repressing the transcriptional activator activity of the CLOCK-BMAL1 heterodimer. Restricts the CLOCK and BMAL1 localization to the cytoplasm. Plays a role in both the input and output pathways of the circadian clock: in the input component, is involved in modulating the magnitude of photic entrainment and in the output component, contributes to the regulation of a variety of liver clock-controlled genes involved in lipid metabolism. The polypeptide is DNA-binding protein inhibitor ID-2 (ID2) (Bos taurus (Bovine)).